A 653-amino-acid polypeptide reads, in one-letter code: Pentatricopeptide repeat-containing protein At3g14730 (653 aa).

14 PPR repeats span residues 59–93 (NVATCIATLQRCAQRKDYVSGQQIHGFMVRKGFLD), 95–119 (SPRAGTSLVNMYAKCGLMRRAVLVF), 125–159 (DVFGYNALISGFVVNGSPLDAMETYREMRANGILP), 160–193 (DKYTFPSLLKGSDAMELSDVKKVHGLAFKLGFDS), 194–224 (DCYVGSGLVTSYSKFMSVEDAQKVFDELPDR), 226–260 (DSVLWNALVNGYSQIFRFEDALLVFSKMREEGVGV), 261–295 (SRHTITSVLSAFTVSGDIDNGRSIHGLAVKTGSGS), 296–326 (DIVVSNALIDMYGKSKWLEEANSIFEAMDER), 327–361 (DLFTWNSVLCVHDYCGDHDGTLALFERMLCSGIRP), 362–396 (DIVTLTTVLPTCGRLASLRQGREIHGYMIVSGLLN), 401–431 (NEFIHNSLMDMYVKCGDLRDARMVFDSMRVK), 432–466 (DSASWNIMINGYGVQSCGELALDMFSCMCRAGVKP), 467–497 (DEITFVGLLQACSHSGFLNEGRNFLAQMETV), and 503–537 (TSDHYACVIDMLGRADKLEEAYELAISKPICDNPV). The segment at 538–613 (VWRSILSSCR…TPGCSWIVLK (76 aa)) is type E motif. The type E(+) motif stretch occupies residues 614–644 (NGVHTFFTGNQTHPEFKSIHDWLSLVISHMH).

The protein belongs to the PPR family. PCMP-E subfamily.

The protein is Pentatricopeptide repeat-containing protein At3g14730 (PCMP-E31) of Arabidopsis thaliana (Mouse-ear cress).